Reading from the N-terminus, the 276-residue chain is NH(3)-dependent NAD(+) synthetase (276 aa).

43–50 provides a ligand contact to ATP; sequence GISGGVDS. D49 contacts Mg(2+). Deamido-NAD(+) is bound at residue R146. T166 is a binding site for ATP. Residue E171 coordinates Mg(2+). 2 residues coordinate deamido-NAD(+): K179 and D186. Residues K195 and T217 each coordinate ATP. 266–267 contacts deamido-NAD(+); it reads HK.

Belongs to the NAD synthetase family. As to quaternary structure, homodimer.

It carries out the reaction deamido-NAD(+) + NH4(+) + ATP = AMP + diphosphate + NAD(+) + H(+). The protein operates within cofactor biosynthesis; NAD(+) biosynthesis; NAD(+) from deamido-NAD(+) (ammonia route): step 1/1. Catalyzes the ATP-dependent amidation of deamido-NAD to form NAD. Uses ammonia as a nitrogen source. This is NH(3)-dependent NAD(+) synthetase from Shewanella baltica (strain OS223).